Consider the following 315-residue polypeptide: Protoheme IX farnesyltransferase 1 (315 aa).

9 consecutive transmembrane segments (helical) span residues 25-45, 49-69, 87-107, 120-139, 145-165, 176-196, 220-240, 242-262, and 280-300; these read PGII…AAKG, LALM…GCAV, RVTV…LALG, ALAL…VYSL, SVYG…VGYC, AILL…IAIF, LHIV…PLAG, TGIA…AMAL, and GFSI…SQVI.

It belongs to the UbiA prenyltransferase family. Protoheme IX farnesyltransferase subfamily.

The protein localises to the cell inner membrane. The enzyme catalyses heme b + (2E,6E)-farnesyl diphosphate + H2O = Fe(II)-heme o + diphosphate. It functions in the pathway porphyrin-containing compound metabolism; heme O biosynthesis; heme O from protoheme: step 1/1. In terms of biological role, converts heme B (protoheme IX) to heme O by substitution of the vinyl group on carbon 2 of heme B porphyrin ring with a hydroxyethyl farnesyl side group. The sequence is that of Protoheme IX farnesyltransferase 1 from Shewanella sp. (strain W3-18-1).